A 213-amino-acid polypeptide reads, in one-letter code: Mite allergen Der f 7 (213 aa).

The signal sequence occupies residues 1 to 17 (MMKFLLIAAVAFVAVSA). Asparagine 151 is a glycosylation site (N-linked (GlcNAc...) asparagine).

The protein belongs to the mite group 7 allergen family.

It is found in the secreted. The protein is Mite allergen Der f 7 (DERF7) of Dermatophagoides farinae (American house dust mite).